The chain runs to 141 residues: Hemoglobin subunit alpha-A (141 aa).

The region spanning 1–141 (VLSASDKANV…VGTVLTAKYR (141 aa)) is the Globin domain. Histidine 58 is an O2 binding site. Residue histidine 87 coordinates heme b.

This sequence belongs to the globin family. In terms of assembly, heterotetramer of two alpha chains and two beta chains. Red blood cells.

In terms of biological role, involved in oxygen transport from the lung to the various peripheral tissues. The protein is Hemoglobin subunit alpha-A (HBAA) of Sturnus vulgaris (Starling).